The sequence spans 259 residues: tRNA-cytidine(32) 2-sulfurtransferase (259 aa).

The PP-loop motif motif lies at 40 to 45 (SGGKDS). The [4Fe-4S] cluster site is built by Cys114, Cys117, and Cys205.

This sequence belongs to the TtcA family. As to quaternary structure, homodimer. Requires Mg(2+) as cofactor. It depends on [4Fe-4S] cluster as a cofactor.

The protein resides in the cytoplasm. The enzyme catalyses cytidine(32) in tRNA + S-sulfanyl-L-cysteinyl-[cysteine desulfurase] + AH2 + ATP = 2-thiocytidine(32) in tRNA + L-cysteinyl-[cysteine desulfurase] + A + AMP + diphosphate + H(+). It participates in tRNA modification. In terms of biological role, catalyzes the ATP-dependent 2-thiolation of cytidine in position 32 of tRNA, to form 2-thiocytidine (s(2)C32). The sulfur atoms are provided by the cysteine/cysteine desulfurase (IscS) system. This Bdellovibrio bacteriovorus (strain ATCC 15356 / DSM 50701 / NCIMB 9529 / HD100) protein is tRNA-cytidine(32) 2-sulfurtransferase.